The sequence spans 192 residues: MNTQDVIDIFKQADAILEGHFILTSGRHSAIYMQKAQVFMHADLTEKLCRGLAEKIKRSIKEKIDYVVGPAIGGLIPSYETSRHLGIPSLWVERVNGIFELRRFKIKNGARVVIVEDIVTTGLSIRETVEALVAAGADVVASACILDRSGGKVDVGVPLIALAEYEIVSYASDALPTELALLPAVKPGSRNI.

116–124 (EDIVTTGLS) provides a ligand contact to 5-phospho-alpha-D-ribose 1-diphosphate. Orotate contacts are provided by threonine 120 and arginine 148.

Belongs to the purine/pyrimidine phosphoribosyltransferase family. PyrE subfamily. Homodimer. Mg(2+) is required as a cofactor.

The catalysed reaction is orotidine 5'-phosphate + diphosphate = orotate + 5-phospho-alpha-D-ribose 1-diphosphate. The protein operates within pyrimidine metabolism; UMP biosynthesis via de novo pathway; UMP from orotate: step 1/2. Its function is as follows. Catalyzes the transfer of a ribosyl phosphate group from 5-phosphoribose 1-diphosphate to orotate, leading to the formation of orotidine monophosphate (OMP). The sequence is that of Orotate phosphoribosyltransferase from Bartonella quintana (strain Toulouse) (Rochalimaea quintana).